A 64-amino-acid chain; its full sequence is U6-theraphotoxin-Cg1a (64 aa).

An N-terminal signal peptide occupies residues 1-20; that stretch reads MTRKILAVLLVFTLVACNNA. Residues 21 to 38 constitute a propeptide that is removed on maturation; that stretch reads EKYSETDVEDSPMIQERR. Intrachain disulfides connect Cys-39–Cys-55, Cys-46–Cys-58, and Cys-54–Cys-63.

It belongs to the neurotoxin 36 family. 02 subfamily. Expressed by the venom gland.

It is found in the secreted. In terms of biological role, probable ion channel inhibitor. This Chilobrachys guangxiensis (Chinese earth tiger tarantula) protein is U6-theraphotoxin-Cg1a.